The chain runs to 312 residues: Taste receptor type 2 member 9 (312 aa).

At 1 to 9 (MPSAIEAIY) the chain is on the extracellular side. The helical transmembrane segment at 10 to 32 (IILIAGELTIGIWGNGFIVLVNC) threads the bilayer. Over 33–52 (IDWLKRRDISLIDIILISLA) the chain is Cytoplasmic. A helical transmembrane segment spans residues 53–72 (ISRICLLCVISLDGFFMLLF). At 73–86 (PGTYGNSVLVSIVN) the chain is on the extracellular side. Residues 87 to 109 (VVWTFANNSSLWFTSCLSIFYLL) traverse the membrane as a helical segment. The Cytoplasmic portion of the chain corresponds to 110–128 (KIANISHPFFFWLKLKINK). A helical transmembrane segment spans residues 129–146 (VMLAILLGSFLISLIISV). The Extracellular portion of the chain corresponds to 147 to 180 (PKNDDMWYHLFKVSHEENITWKFKVSKIPGTFKQ). N-linked (GlcNAc...) asparagine glycosylation is present at N164. A helical membrane pass occupies residues 181-203 (LTLNLGVMVPFILCLISFFLLLF). Over 204 to 234 (SLVRHTKQIRLHATGFRDPSTEAHMRAIKAV) the chain is Cytoplasmic. A helical membrane pass occupies residues 235–257 (IIFLLLLIVYYPVFLVMTSSALI). The Extracellular portion of the chain corresponds to 258–261 (PQGK). The helical transmembrane segment at 262 to 284 (LVLMIGDIVTVIFPSSHSFILIM) threads the bilayer. At 285–312 (GNSKLREAFLKMLRFVKCFLRRRKPFVP) the chain is on the cytoplasmic side.

This sequence belongs to the G-protein coupled receptor T2R family. Expressed in subsets of taste receptor cells of the tongue and palate epithelium and exclusively in gustducin-positive cells.

The protein localises to the membrane. In terms of biological role, gustducin-coupled receptor implicated in the perception of bitter compounds in the oral cavity and the gastrointestinal tract. Signals through PLCB2 and the calcium-regulated cation channel TRPM5. The chain is Taste receptor type 2 member 9 (TAS2R9) from Homo sapiens (Human).